The chain runs to 185 residues: Large ribosomal subunit protein bL12c (185 aa).

Residues 1 to 47 constitute a chloroplast transit peptide; sequence MASTALSSAFSLLSLPSSSSPAAAAAAAPRSFAVPSRARPRRAVAVV.

The protein belongs to the bacterial ribosomal protein bL12 family.

The protein localises to the plastid. It localises to the chloroplast. This Oryza sativa subsp. japonica (Rice) protein is Large ribosomal subunit protein bL12c (RPL12-2).